Reading from the N-terminus, the 517-residue chain is Putative succinate-semialdehyde dehydrogenase [NADP(+)] (517 aa).

Residues Trp157–Asn158, Lys181–Ser184, and Gly232–Ser233 each bind NADP(+). The active-site Proton acceptor is Glu254. Leu255 provides a ligand contact to NADP(+). Cys288 serves as the catalytic Nucleophile. Glu386 provides a ligand contact to NADP(+).

The protein belongs to the aldehyde dehydrogenase family.

It catalyses the reaction succinate semialdehyde + NADP(+) + H2O = succinate + NADPH + 2 H(+). Its function is as follows. Catalyzes the NADP(+)-dependent oxidation of succinate semialdehyde to succinate. Although it has succinate semialdehyde dehydrogenase activity, is likely to act physiologically on a different aldehyde(s). In Mycolicibacterium smegmatis (strain ATCC 700084 / mc(2)155) (Mycobacterium smegmatis), this protein is Putative succinate-semialdehyde dehydrogenase [NADP(+)] (gabD2).